A 409-amino-acid polypeptide reads, in one-letter code: Glucose-1-phosphate adenylyltransferase (409 aa).

Residues Gly-168, 183–184, and Ser-201 contribute to the alpha-D-glucose 1-phosphate site; that span reads EK.

It belongs to the bacterial/plant glucose-1-phosphate adenylyltransferase family. Homotetramer.

It carries out the reaction alpha-D-glucose 1-phosphate + ATP + H(+) = ADP-alpha-D-glucose + diphosphate. It participates in glycan biosynthesis; glycogen biosynthesis. Its function is as follows. Involved in the biosynthesis of ADP-glucose, a building block required for the elongation reactions to produce glycogen. Catalyzes the reaction between ATP and alpha-D-glucose 1-phosphate (G1P) to produce pyrophosphate and ADP-Glc. This Corynebacterium efficiens (strain DSM 44549 / YS-314 / AJ 12310 / JCM 11189 / NBRC 100395) protein is Glucose-1-phosphate adenylyltransferase.